Consider the following 641-residue polypeptide: Ribosomal oxygenase 1 (641 aa).

Position 1 is an N-acetylmethionine (Met-1). 2 disordered regions span residues 1 to 35 (MDGL…LPLR) and 54 to 80 (RTQT…DALP). A compositionally biased stretch (basic residues) spans 12 to 23 (RRGRPKRRRKPQ). A phosphoserine mark is found at Ser-60, Ser-63, and Ser-109. Residues 294 to 439 (CSLRLLCPQA…DFLEAILPLA (146 aa)) enclose the JmjC domain. His-340, Asp-342, and His-405 together coordinate Fe cation.

Belongs to the ROX family. NO66 subfamily. As to quaternary structure, interacts with SP7/OSX; the interaction is direct. Interacts with MYC. Interacts with PHF19; leading to its recruitment to H3K36me3 sites. The cofactor is Fe(2+). As to expression, widely expressed. Overexpressed in lung carcinomas.

The protein localises to the nucleus. Its subcellular location is the nucleolus. It is found in the nucleoplasm. It catalyses the reaction N(6),N(6)-dimethyl-L-lysyl(36)-[histone H3] + 2 2-oxoglutarate + 2 O2 = L-lysyl(36)-[histone H3] + 2 formaldehyde + 2 succinate + 2 CO2. The enzyme catalyses N(6)-methyl-L-lysyl-[protein] + 2-oxoglutarate + O2 = L-lysyl-[protein] + formaldehyde + succinate + CO2. It carries out the reaction L-histidyl-[protein] + 2-oxoglutarate + O2 = (3S)-3-hydroxy-L-histidyl-[protein] + succinate + CO2. Oxygenase that can act as both a histone lysine demethylase and a ribosomal histidine hydroxylase. Specifically demethylates 'Lys-4' (H3K4me) and 'Lys-36' (H3K36me) of histone H3, thereby playing a central role in histone code. Preferentially demethylates trimethylated H3 'Lys-4' (H3K4me3) and monomethylated H3 'Lys-4' (H3K4me1) residues, while it has weaker activity for dimethylated H3 'Lys-36' (H3K36me2). Acts as a regulator of osteoblast differentiation via its interaction with SP7/OSX by demethylating H3K4me and H3K36me, thereby inhibiting SP7/OSX-mediated promoter activation. Also catalyzes demethylation of non-histone proteins, such as CGAS: demethylation of monomethylated CGAS promotes interaction between CGAS and PARP1, followed by PARP1 inactivation. Also catalyzes the hydroxylation of 60S ribosomal protein L8 on 'His-216', thereby playing a role in ribosome biogenesis. Participates in MYC-induced transcriptional activation. In Homo sapiens (Human), this protein is Ribosomal oxygenase 1.